We begin with the raw amino-acid sequence, 269 residues long: 4-hydroxy-tetrahydrodipicolinate reductase (269 aa).

NAD(+) is bound by residues 11–16 (GASGRM) and E37. Position 38 (R38) interacts with NADP(+). Residues 101 to 103 (GTT) and 125 to 128 (AGNM) contribute to the NAD(+) site. H158 (proton donor/acceptor) is an active-site residue. Position 159 (H159) interacts with (S)-2,3,4,5-tetrahydrodipicolinate. Residue K162 is the Proton donor of the active site. 168–169 (GT) serves as a coordination point for (S)-2,3,4,5-tetrahydrodipicolinate.

It belongs to the DapB family.

It is found in the cytoplasm. The enzyme catalyses (S)-2,3,4,5-tetrahydrodipicolinate + NAD(+) + H2O = (2S,4S)-4-hydroxy-2,3,4,5-tetrahydrodipicolinate + NADH + H(+). It catalyses the reaction (S)-2,3,4,5-tetrahydrodipicolinate + NADP(+) + H2O = (2S,4S)-4-hydroxy-2,3,4,5-tetrahydrodipicolinate + NADPH + H(+). Its pathway is amino-acid biosynthesis; L-lysine biosynthesis via DAP pathway; (S)-tetrahydrodipicolinate from L-aspartate: step 4/4. Functionally, catalyzes the conversion of 4-hydroxy-tetrahydrodipicolinate (HTPA) to tetrahydrodipicolinate. This is 4-hydroxy-tetrahydrodipicolinate reductase from Cereibacter sphaeroides (strain ATCC 17023 / DSM 158 / JCM 6121 / CCUG 31486 / LMG 2827 / NBRC 12203 / NCIMB 8253 / ATH 2.4.1.) (Rhodobacter sphaeroides).